We begin with the raw amino-acid sequence, 234 residues long: Probable porphobilinogen deaminase (234 aa).

The protein belongs to the HMBS family.

The catalysed reaction is 4 porphobilinogen + H2O = hydroxymethylbilane + 4 NH4(+). Its pathway is porphyrin-containing compound metabolism; protoporphyrin-IX biosynthesis; coproporphyrinogen-III from 5-aminolevulinate: step 2/4. Tetrapolymerization of the monopyrrole PBG into the hydroxymethylbilane pre-uroporphyrinogen in several discrete steps. This chain is Probable porphobilinogen deaminase (hemC), found in Chlamydia pneumoniae (Chlamydophila pneumoniae).